The primary structure comprises 138 residues: Transcription antitermination protein NusB (138 aa).

The protein belongs to the NusB family.

Functionally, involved in transcription antitermination. Required for transcription of ribosomal RNA (rRNA) genes. Binds specifically to the boxA antiterminator sequence of the ribosomal RNA (rrn) operons. This Yersinia pseudotuberculosis serotype O:1b (strain IP 31758) protein is Transcription antitermination protein NusB.